A 472-amino-acid polypeptide reads, in one-letter code: Squamosa promoter-binding-like protein 18 (472 aa).

Residues 89–110 (AKVPPSTSTLKRPRGGGGGGGG) are disordered. Residues 112–189 (CPSCAVDGCK…DGHNRRRRKP (78 aa)) form an SBP-type zinc finger. Zn(2+)-binding residues include Cys-115, Cys-120, Cys-137, His-140, Cys-156, Cys-159, His-163, and Cys-175. The Bipartite nuclear localization signal signature appears at 172–188 (KRSCRKRLDGHNRRRRK). 3 disordered regions span residues 179–218 (LDGH…RPEP), 233–261 (SHHH…TAAF), and 358–381 (SVDV…HHHH). The span at 192 to 209 (DSMSSGSFMTSQQGTRFA) shows a compositional bias: polar residues. Over residues 252 to 261 (SPSSATTAAF) the composition is skewed to low complexity.

As to expression, expressed in young panicles.

It is found in the nucleus. Its function is as follows. Trans-acting factor that binds specifically to the consensus nucleotide sequence 5'-TNCGTACAA-3'. May be involved in panicle development. The protein is Squamosa promoter-binding-like protein 18 (SPL18) of Oryza sativa subsp. japonica (Rice).